Consider the following 92-residue polypeptide: DNA-directed RNA polymerase subunit Rpo11 (92 aa).

The protein belongs to the archaeal Rpo11/eukaryotic RPB11/RPC19 RNA polymerase subunit family. In terms of assembly, part of the RNA polymerase complex.

Its subcellular location is the cytoplasm. It catalyses the reaction RNA(n) + a ribonucleoside 5'-triphosphate = RNA(n+1) + diphosphate. Functionally, DNA-dependent RNA polymerase (RNAP) catalyzes the transcription of DNA into RNA using the four ribonucleoside triphosphates as substrates. This chain is DNA-directed RNA polymerase subunit Rpo11, found in Methanosarcina barkeri (strain Fusaro / DSM 804).